A 504-amino-acid polypeptide reads, in one-letter code: MGETLGDSLIDPESDAFDTLSANISQEVTMVDTEMPFWPTNFGISSVDLSVMDDHSHSFDIKPFTTVDFSSISTPHYEDIPFPRADPMVADYKYDLKLQDYQSAIKVEPVSPPYYSEKTQLYNKPHEEPSNSLMAIECRVCGDKASGFHYGVHACEGCKGFFRRTIRLKLIYDRCDLNCRIHKKSRNKCQYCRFQKCLAVGMSHNAIRFGRMPQAEKEKLLAEISSDIDQLNPESADLRALAKHLYDSYIKSFPLTKAKARAILTGKTTDKSPFVIYDMNSLMMGEDKIKFKHITPLQEQSKEVAIRIFQGCQFRSVEAVQEITEYAKNIPGFVNLDLNDQVTLLKYGVHEIIYTMLASLMNKDGVLISEGQGFMTREFLKSLRKPFGDFMEPKFEFAVKFNALELDDSDLAIFIAVIILSGDRPGLLNVKPIEDIQDNLLQALELQLKLNHPESSQLFAKLLQKMTDLRQIVTEHVQLLQVIKKTETDMSLHPLLQEIYKDLY.

The residue at position 111 (Ser-111) is a Phosphoserine; by MAPK. The nuclear receptor DNA-binding region spans 135–209; that stretch reads AIECRVCGDK…VGMSHNAIRF (75 aa). NR C4-type zinc fingers lie at residues 138–158 and 175–197; these read CRVCGDKASGFHYGVHACEGC and CDLNCRIHKKSRNKCQYCRFQKC. The interval 204–279 is interaction with FAM120B; sequence HNAIRFGRMP…DKSPFVIYDM (76 aa). The 266-residue stretch at 237–502 folds into the NR LBD domain; it reads DLRALAKHLY…HPLLQEIYKD (266 aa). Lys-251 is covalently cross-linked (Glycyl lysine isopeptide (Lys-Gly) (interchain with G-Cter in ubiquitin)). The short motif at 494 to 502 is the 9aaTAD element; the sequence is PLLQEIYKD.

This sequence belongs to the nuclear hormone receptor family. NR1 subfamily. As to quaternary structure, interacts with FOXO1 (acetylated form). Heterodimer with other nuclear receptors, such as RXRA. The heterodimer with the retinoic acid receptor RXRA is called adipocyte-specific transcription factor ARF6. Interacts with NCOA6 coactivator, leading to a strong increase in transcription of target genes. Interacts with coactivator PPARBP, leading to a mild increase in transcription of target genes. Interacts with NOCA7 in a ligand-inducible manner. Interacts with NCOA1 and NCOA2 LXXLL motifs. Interacts with ASXL1, ASXL2, DNTTIP2, FAM120B, MAP2K1/MEK1, NR0B2, PDPK1, PRDM16, PRMT2 and TGFB1I1. Interacts (when activated by agonist) with PPP5C. Interacts with HELZ2 and THRAP3; the interaction stimulates the transcriptional activity of PPARG. Interacts with PER2, the interaction is ligand dependent and blocks PPARG recruitment to target promoters. Interacts with NOCT. Interacts with ACTN4. Interacts (when in the liganded conformation) with GPS2. Interacts with CRY1 and CRY2 in a ligand-dependent manner. In the absence of hormonal ligand, interacts with TACC1. In macrophages, interacts with PAQR3 and STUB1; the interactions promote PPARG poylubiquitination and STUB1-mediated degradation. Post-translationally, phosphorylated at basal conditions and dephosphorylated when treated with the ligand. May be dephosphorylated by PPP5C. The phosphorylated form may be inactive and dephosphorylation induces adipogenic activity. Ubiquitinated by E3 ubiquitin-protein ligase complex containing FBXO9; leading to proteasomal degradation. Ubiquitinated at Lys-251 by TRIM55 leading to proteasomal degradation. Ubiquitinated by E3 ubiquitin-protein ligase STUB1/CHIP; leading to proteasomal degradation. As to expression, highest expression in adipose tissue and lower in spleen. Very low levels in kidney, intestine, lung and muscle.

The protein localises to the nucleus. It is found in the cytoplasm. PDPK1 activates its transcriptional activity independently of its kinase activity. Functionally, nuclear receptor that binds peroxisome proliferators such as hypolipidemic drugs and fatty acids. Once activated by a ligand, the nuclear receptor binds to DNA specific PPAR response elements (PPRE) and modulates the transcription of its target genes, such as acyl-CoA oxidase. It therefore controls the peroxisomal beta-oxidation pathway of fatty acids. Key regulator of adipocyte differentiation and glucose homeostasis. ARF6 acts as a key regulator of the tissue-specific adipocyte P2 (aP2) enhancer. Acts as a critical regulator of gut homeostasis by suppressing NF-kappa-B-mediated pro-inflammatory responses. Plays a role in the regulation of cardiovascular circadian rhythms by regulating the transcription of BMAL1 in the blood vessels. This is Peroxisome proliferator-activated receptor gamma (PPARG) from Sus scrofa (Pig).